Consider the following 407-residue polypeptide: Nicotinate phosphoribosyltransferase (407 aa).

Position 224 is a phosphohistidine; by autocatalysis (His-224).

The protein belongs to the NAPRTase family. Post-translationally, transiently phosphorylated on a His residue during the reaction cycle. Phosphorylation strongly increases the affinity for substrates and increases the rate of nicotinate D-ribonucleotide production. Dephosphorylation regenerates the low-affinity form of the enzyme, leading to product release.

It carries out the reaction nicotinate + 5-phospho-alpha-D-ribose 1-diphosphate + ATP + H2O = nicotinate beta-D-ribonucleotide + ADP + phosphate + diphosphate. It participates in cofactor biosynthesis; NAD(+) biosynthesis; nicotinate D-ribonucleotide from nicotinate: step 1/1. Its function is as follows. Catalyzes the synthesis of beta-nicotinate D-ribonucleotide from nicotinate and 5-phospho-D-ribose 1-phosphate at the expense of ATP. The sequence is that of Nicotinate phosphoribosyltransferase from Pseudomonas savastanoi pv. phaseolicola (strain 1448A / Race 6) (Pseudomonas syringae pv. phaseolicola (strain 1448A / Race 6)).